We begin with the raw amino-acid sequence, 323 residues long: GDSL esterase/lipase At5g03980 (323 aa).

Residues 1-21 (MSTTKALSLLVFILFVSLVHS) form the signal peptide. S36 functions as the Nucleophile in the catalytic mechanism. N77 carries N-linked (GlcNAc...) asparagine glycosylation. Residues D294 and H297 contribute to the active site.

Belongs to the 'GDSL' lipolytic enzyme family.

Its subcellular location is the secreted. This chain is GDSL esterase/lipase At5g03980, found in Arabidopsis thaliana (Mouse-ear cress).